The sequence spans 1021 residues: Immunoglobulin superfamily member 2 (1021 aa).

The first 20 residues, 1–20 (MAGISYVASFFLLLTKLSIG), serve as a signal peptide directing secretion. At 21–954 (QREVTVQKGP…LPSRICSSAP (934 aa)) the chain is on the extracellular side. Ig-like C2-type domains follow at residues 22–139 (REVT…AKTN), 144–265 (PDTL…WMFI), 279–389 (PAVK…RTGS), 408–525 (PAAR…RDLS), 541–651 (LQVS…NSLY), 656–794 (PRAS…WHKL), and 808–925 (PTGS…KWIN). Intrachain disulfides connect cysteine 43–cysteine 121 and cysteine 168–cysteine 249. A glycan (N-linked (GlcNAc...) asparagine) is linked at asparagine 44. Residues 253–255 (EWI) carry the EWI motif motif. Intrachain disulfides connect cysteine 304–cysteine 377, cysteine 434–cysteine 511, cysteine 562–cysteine 640, cysteine 697–cysteine 778, and cysteine 834–cysteine 909. An N-linked (GlcNAc...) asparagine glycan is attached at asparagine 322. The chain crosses the membrane as a helical span at residues 955–975 (LLYFLFICPFVLLLLLLISLL). The Cytoplasmic portion of the chain corresponds to 976–1021 (CLYWKARKLSTLRSNTRKEKALWVDLKEAGGVTTNRREDEEEDEGN).

In terms of processing, N-glycosylated. As to expression, expressed in lung, thymus and small intestine. Detected in cutaneous dendritic cells, activated T-cells, monocytes and granulocytes as well as with epithelial cells with dendritic morphology. Expressed in some leukemic cells, the CD4(+) CD56(+) blastic tumor cells, as well as in Langerhans cells from LCH (Langerhans cell histiocytosis) patients.

It localises to the membrane. Functionally, plays a role as inhibitor of T-cells proliferation induced by CD3. Inhibits expression of IL2RA on activated T-cells and secretion of IL2. Inhibits tyrosine kinases that are required for IL2 production and cellular proliferation. Inhibits phospholipase C-gamma-1/PLCG1 phosphorylation and subsequent CD3-induced changes in intracellular free calcium. Prevents nuclear translocation of nuclear factor of activated T-cell to the nucleus. Plays a role in the inhibition of T-cell proliferation via IL10 secretion by cutaneous dendritic cells. May be a marker of CD4(+) CD56(+) leukemic tumor cells. The protein is Immunoglobulin superfamily member 2 (CD101) of Homo sapiens (Human).